The chain runs to 177 residues: Dual-action ribosomal maturation protein DarP (177 aa).

Belongs to the DarP family.

It is found in the cytoplasm. Its function is as follows. Member of a network of 50S ribosomal subunit biogenesis factors which assembles along the 30S-50S interface, preventing incorrect 23S rRNA structures from forming. Promotes peptidyl transferase center (PTC) maturation. This chain is Dual-action ribosomal maturation protein DarP, found in Histophilus somni (strain 129Pt) (Haemophilus somnus).